A 201-amino-acid chain; its full sequence is Transgelin (201 aa).

Alanine 2 is subject to N-acetylalanine. The region spanning 24–137 (EELEERLVEW…RTVMALGSLA (114 aa)) is the Calponin-homology (CH) domain. The interval 154-161 (KKAQEHKR) is could be involved in actin-binding. A Phosphoserine modification is found at serine 166. At lysine 172 the chain carries N6-acetyllysine. Residues 175–200 (IGLQMGSNRGASQAGMTGYGRPRQII) form a Calponin-like repeat. Residue serine 181 is modified to Phosphoserine. Residue arginine 183 is modified to Omega-N-methylarginine.

This sequence belongs to the calponin family. In terms of tissue distribution, smooth muscle and mesenchymal cells but not in skeletal muscle or lymphocytes.

The protein resides in the cytoplasm. Its function is as follows. Actin cross-linking/gelling protein. The sequence is that of Transgelin (Tagln) from Rattus norvegicus (Rat).